A 217-amino-acid chain; its full sequence is Octanoyltransferase (217 aa).

The BPL/LPL catalytic domain maps to 31–206; that stretch reads KSVMDEAWLL…ELVSRLGYAE (176 aa). Residues 70–77, 137–139, and 150–152 each bind substrate; these read RGGQVTYH, SLG, and GLA. Residue Cys168 is the Acyl-thioester intermediate of the active site.

Belongs to the LipB family.

It localises to the cytoplasm. It catalyses the reaction octanoyl-[ACP] + L-lysyl-[protein] = N(6)-octanoyl-L-lysyl-[protein] + holo-[ACP] + H(+). It functions in the pathway protein modification; protein lipoylation via endogenous pathway; protein N(6)-(lipoyl)lysine from octanoyl-[acyl-carrier-protein]: step 1/2. In terms of biological role, catalyzes the transfer of endogenously produced octanoic acid from octanoyl-acyl-carrier-protein onto the lipoyl domains of lipoate-dependent enzymes. Lipoyl-ACP can also act as a substrate although octanoyl-ACP is likely to be the physiological substrate. The sequence is that of Octanoyltransferase from Pseudomonas aeruginosa (strain UCBPP-PA14).